Consider the following 179-residue polypeptide: Large ribosomal subunit protein uL5 (179 aa).

This sequence belongs to the universal ribosomal protein uL5 family. Part of the 50S ribosomal subunit; part of the 5S rRNA/L5/L18/L25 subcomplex. Contacts the 5S rRNA and the P site tRNA. Forms a bridge to the 30S subunit in the 70S ribosome.

In terms of biological role, this is one of the proteins that bind and probably mediate the attachment of the 5S RNA into the large ribosomal subunit, where it forms part of the central protuberance. In the 70S ribosome it contacts protein S13 of the 30S subunit (bridge B1b), connecting the 2 subunits; this bridge is implicated in subunit movement. Contacts the P site tRNA; the 5S rRNA and some of its associated proteins might help stabilize positioning of ribosome-bound tRNAs. The sequence is that of Large ribosomal subunit protein uL5 from Prochlorococcus marinus (strain MIT 9211).